Reading from the N-terminus, the 711-residue chain is Ent-copalyl diphosphate synthase 1 (711 aa).

Lysine 145 is a substrate binding site. Mg(2+)-binding residues include aspartate 277 and aspartate 279. A DXDD motif motif is present at residues 277-280 (DIDD). Lysine 364 contacts substrate.

It belongs to the terpene synthase family. Tpsc subfamily. The cofactor is Mg(2+).

It catalyses the reaction (2E,6E,10E)-geranylgeranyl diphosphate = ent-copalyl diphosphate. The protein operates within secondary metabolite biosynthesis; terpenoid biosynthesis. Involved in the biosynthesis of ent-kaurene diterpenoids natural products such as oridonin, miltiradiene, eriocalyxin B and nezukol, known to exhibit antitumor, anti-inflammatory and antibacterial activities. Catalyzes the conversion of (2E,6E,10E)-geranylgeranyl diphosphate (GGPP) to ent-copalyl diphosphate (ent-CPP). In Isodon japonicus (Scutellaria japonica), this protein is Ent-copalyl diphosphate synthase 1.